The following is a 512-amino-acid chain: Alanine--glyoxylate aminotransferase 2, mitochondrial (512 aa).

The N-terminal 39 residues, 1–39 (MSLAWRTLQKAFYLETSLRILQMRPSLSCASRIYVPKLT), are a transit peptide targeting the mitochondrion. Residue Lys-55 is modified to N6-acetyllysine. Residue Lys-69 is modified to N6-acetyllysine; alternate. Lys-69 is subject to N6-succinyllysine; alternate. At Lys-82 the chain carries N6-acetyllysine. An N6-acetyllysine; alternate modification is found at Lys-260. Lys-260 carries the post-translational modification N6-succinyllysine; alternate. Lys-302 carries the N6-succinyllysine modification. Lys-348 is modified (N6-(pyridoxal phosphate)lysine). An N6-acetyllysine; alternate mark is found at Lys-415 and Lys-418. N6-succinyllysine; alternate occurs at positions 415 and 418. N6-acetyllysine is present on Lys-452.

It belongs to the class-III pyridoxal-phosphate-dependent aminotransferase family. As to quaternary structure, homotetramer. Requires pyridoxal 5'-phosphate as cofactor. In terms of tissue distribution, expressed in the liver, lung and kidney.

The protein localises to the mitochondrion. It carries out the reaction glyoxylate + L-alanine = glycine + pyruvate. The catalysed reaction is (R)-3-amino-2-methylpropanoate + pyruvate = 2-methyl-3-oxopropanoate + L-alanine. It catalyses the reaction 3-oxopropanoate + L-alanine = beta-alanine + pyruvate. The enzyme catalyses 2-oxobutanoate + L-alanine = (2S)-2-aminobutanoate + pyruvate. It carries out the reaction N(omega),N(omega)-dimethyl-L-arginine + pyruvate = 5-(3,3-dimethylguanidino)-2-oxopentanoate + L-alanine. The catalysed reaction is N(omega),N('omega)-dimethyl-L-arginine + pyruvate = 5-(3,3'-dimethylguanidino)-2-oxopentanoate + L-alanine. It catalyses the reaction N(omega),N(omega)-dimethyl-L-arginine + glyoxylate = 5-(3,3-dimethylguanidino)-2-oxopentanoate + glycine. The enzyme catalyses N(omega),N('omega)-dimethyl-L-arginine + glyoxylate = 5-(3,3'-dimethylguanidino)-2-oxopentanoate + glycine. It carries out the reaction N(omega)-methyl-L-arginine + pyruvate = 5-(3-methylguanidino)-2-oxopentanoate + L-alanine. The catalysed reaction is N(omega)-methyl-L-arginine + glyoxylate = 5-(3-methylguanidino)-2-oxopentanoate + glycine. It catalyses the reaction L-ornithine + pyruvate = 5-amino-2-oxopentanoate + L-alanine. The enzyme catalyses L-ornithine + glyoxylate = 5-amino-2-oxopentanoate + glycine. It carries out the reaction (2S)-2-aminobutanoate + glyoxylate = 2-oxobutanoate + glycine. The catalysed reaction is N(omega),N(omega)-dimethyl-L-arginine + oxaloacetate = 5-(3,3-dimethylguanidino)-2-oxopentanoate + L-aspartate. It catalyses the reaction oxaloacetate + L-alanine = L-aspartate + pyruvate. The enzyme catalyses N(omega),N(omega)-dimethyl-L-arginine + 2-oxobutanoate = 5-(3,3-dimethylguanidino)-2-oxopentanoate + (2S)-2-aminobutanoate. It carries out the reaction 2-oxopentanoate + N(omega),N(omega)-dimethyl-L-arginine = 5-(3,3-dimethylguanidino)-2-oxopentanoate + L-2-aminopentanoate. The catalysed reaction is 2-oxohexanoate + N(omega),N(omega)-dimethyl-L-arginine = L-2-aminohexanoate + 5-(3,3-dimethylguanidino)-2-oxopentanoate. Inhibited by 5-fluorouracil and 6-fluorouracil. Inhibited by phenylhydrazine, hydroxylamine, l-amino-L-proline, para-chloromercuribenzoate and HgCl2. Its function is as follows. Multifunctional aminotransferase with a broad substrate specificity. Catalyzes the conversion of glyoxylate to glycine using alanine as the amino donor. Catalyzes metabolism of not L- but the D-isomer of D-beta-aminoisobutyric acid to generate 2-methyl-3-oxopropanoate and alanine. Catalyzes the transfer of the amino group from beta-alanine to pyruvate to yield L-alanine and 3-oxopropanoate. Can metabolize NG-monomethyl-L-arginine (NMMA), asymmetric NG,NG-dimethyl-L-arginine (ADMA) and symmetric NG,N'G-dimethyl-L-arginine (SDMA). ADMA is a potent inhibitor of nitric-oxide (NO) synthase, and this activity provides mechanism through which the kidney regulates blood pressure. The polypeptide is Alanine--glyoxylate aminotransferase 2, mitochondrial (Agxt2) (Rattus norvegicus (Rat)).